The sequence spans 239 residues: MIELIPAIDIIDGKCVRLSQGDYGSKKVYNENPVEVAKEFEANGIRRLHVVDLDGAASHHVVNYRTLDLIASRTSLIIDFGGGLKSDEDLIIAFENGAQMVTGGSIAVRNPDLFCRWIDRYGSGKIILGADVKDRRIAVNGWKVESTCELFPFLKDYTQKGIEKVICTDISCDGMLAGPSLDLYKEILAEHPTLYLIASGGVSSIADIEALHEAGVPAVIFGKALYEGRITLKELQAFL.

Catalysis depends on Asp9, which acts as the Proton acceptor. The active-site Proton donor is the Asp131.

It belongs to the HisA/HisF family.

It is found in the cytoplasm. It catalyses the reaction 1-(5-phospho-beta-D-ribosyl)-5-[(5-phospho-beta-D-ribosylamino)methylideneamino]imidazole-4-carboxamide = 5-[(5-phospho-1-deoxy-D-ribulos-1-ylimino)methylamino]-1-(5-phospho-beta-D-ribosyl)imidazole-4-carboxamide. It functions in the pathway amino-acid biosynthesis; L-histidine biosynthesis; L-histidine from 5-phospho-alpha-D-ribose 1-diphosphate: step 4/9. This chain is 1-(5-phosphoribosyl)-5-[(5-phosphoribosylamino)methylideneamino] imidazole-4-carboxamide isomerase, found in Bacteroides fragilis (strain YCH46).